The following is a 389-amino-acid chain: 2-aminoethylphosphonate--pyruvate transaminase 1 (389 aa).

K196 is modified (N6-(pyridoxal phosphate)lysine).

The protein belongs to the class-V pyridoxal-phosphate-dependent aminotransferase family. PhnW subfamily. In terms of assembly, homodimer. Pyridoxal 5'-phosphate serves as cofactor.

It carries out the reaction (2-aminoethyl)phosphonate + pyruvate = phosphonoacetaldehyde + L-alanine. Involved in phosphonate degradation. This Paraburkholderia xenovorans (strain LB400) protein is 2-aminoethylphosphonate--pyruvate transaminase 1.